Reading from the N-terminus, the 210-residue chain is Probable GTP-binding protein EngB (210 aa).

One can recognise an EngB-type G domain in the interval 30 to 204 (QGYEVAFAGR…YRVLADWMEL (175 aa)). GTP is bound by residues 38–45 (GRSNAGKS), 64–68 (GRTQL), 82–85 (DLPG), 149–152 (TKAD), and 182–185 (LFSA). Mg(2+)-binding residues include Ser-45 and Thr-66.

The protein belongs to the TRAFAC class TrmE-Era-EngA-EngB-Septin-like GTPase superfamily. EngB GTPase family. Mg(2+) serves as cofactor.

Its function is as follows. Necessary for normal cell division and for the maintenance of normal septation. The protein is Probable GTP-binding protein EngB of Pseudomonas entomophila (strain L48).